Consider the following 1820-residue polypeptide: Kinesin-like protein KIF20B (1820 aa).

The Kinesin motor domain occupies 58 to 479; that stretch reads YLQVCLRIRP…LKFSAIAQKV (422 aa). 152–159 lines the ATP pocket; that stretch reads GLTNSGKT. At Ser-488 the chain carries Phosphoserine. 2 coiled-coil regions span residues 523–603 and 674–793; these read ENSL…KIRE and GFED…MENT. Thr-560 bears the Phosphothreonine mark. The tract at residues 829 to 866 is disordered; it reads SERKRVNENELQQDEPPAKKGSIHVSSAITEDQKKSEE. A Phosphoserine modification is found at Ser-997. Residues 1050–1107 form a necessary and sufficient for interaction with SHTN1 region; that stretch reads ENSFHSSIEAIWEECKEIVKASSKKSHQIEELEQQIEKLQAEVKGYKDENNRLKEKEH. Basic and acidic residues predominate over residues 1247-1264; that stretch reads EEEEETNRQETEKLKEEL. The interval 1247–1275 is disordered; that stretch reads EEEEETNRQETEKLKEELSASSARTQNLK. Positions 1265–1274 are enriched in polar residues; the sequence is SASSARTQNL. The interaction with PIN1 stretch occupies residues 1560–1820; it reads IETQIMDIKP…KRRLRTKTAK (261 aa). Phosphoserine is present on Ser-1588. Thr-1644 carries the phosphothreonine; by CDK1 modification. Phosphoserine occurs at positions 1658, 1715, and 1740. Residues 1760–1772 show a composition bias toward polar residues; sequence LSNVEASKENVSQ. Residues 1760 to 1781 are disordered; the sequence is LSNVEASKENVSQPKRAKRKLY.

Belongs to the TRAFAC class myosin-kinesin ATPase superfamily. Kinesin family. In terms of assembly, oligomerizes (via kinesin motor domain). Associates with microtubules. Interacts (via C-terminal globular tail region) with PIN1 (via WW domain). Interacts with PRC1. Interacts with SHTN1 (via N-terminus); the interaction is direct and promotes the association of SHTN1 to microtubules in primary neurons. Post-translationally, phosphorylated during mitosis by CDK1. In terms of tissue distribution, brain, ovary, kidney and testis (at protein level). Overexpressed in bladder cancer cells (at protein level). Expressed in testis. Overexpressed in bladder cancer cells.

The protein resides in the nucleus. Its subcellular location is the cytoplasm. It is found in the cytoskeleton. It localises to the microtubule organizing center. The protein localises to the centrosome. The protein resides in the nucleolus. Its subcellular location is the nucleoplasm. It is found in the spindle. It localises to the spindle pole. The protein localises to the midbody. The protein resides in the cell projection. Its subcellular location is the axon. It is found in the growth cone. Plus-end-directed motor enzyme that is required for completion of cytokinesis. Required for proper midbody organization and abscission in polarized cortical stem cells. Plays a role in the regulation of neuronal polarization by mediating the transport of specific cargos. Participates in the mobilization of SHTN1 and in the accumulation of PIP3 in the growth cone of primary hippocampal neurons in a tubulin and actin-dependent manner. In the developing telencephalon, cooperates with SHTN1 to promote both the transition from the multipolar to the bipolar stage and the radial migration of cortical neurons from the ventricular zone toward the superficial layer of the neocortex. Involved in cerebral cortex growth. Acts as an oncogene for promoting bladder cancer cells proliferation, apoptosis inhibition and carcinogenic progression. This chain is Kinesin-like protein KIF20B, found in Homo sapiens (Human).